The primary structure comprises 347 residues: FK506-binding protein-like (347 aa).

A disordered region spans residues 1–24 (METSPISPMNEKNTAQPQQREENA). Phosphothreonine is present on Thr-3. 3 TPR repeats span residues 208-241 (AKEE…LLTL), 250-283 (TTLY…EPGH), and 284-317 (LKAL…DPKN).

As to quaternary structure, forms a ternary complex with CDKN1A/p21 and HSP90AB1/Hsp90.

Functionally, may be involved in response to X-ray. Regulates p21 protein stability by binding to Hsp90 and p21. The chain is FK506-binding protein-like (Fkbpl) from Mus musculus (Mouse).